A 623-amino-acid chain; its full sequence is Glutathione import ATP-binding protein GsiA (623 aa).

ABC transporter domains follow at residues 15-269 and 314-564; these read VENL…RALL and LRVR…RKLL. ATP is bound by residues 49 to 56 and 357 to 364; these read GESGSGKS.

This sequence belongs to the ABC transporter superfamily. Glutathione importer (TC 3.A.1.5.11) family. The complex is composed of two ATP-binding proteins (GsiA), two transmembrane proteins (GsiC and GsiD) and a solute-binding protein (GsiB).

It is found in the cell inner membrane. It catalyses the reaction glutathione(out) + ATP + H2O = glutathione(in) + ADP + phosphate + H(+). Its function is as follows. Part of the ABC transporter complex GsiABCD involved in glutathione import. Responsible for energy coupling to the transport system. This chain is Glutathione import ATP-binding protein GsiA, found in Shigella dysenteriae serotype 1 (strain Sd197).